A 440-amino-acid chain; its full sequence is Guanine/hypoxanthine permease PbuG (440 aa).

The next 13 membrane-spanning stretches (helical) occupy residues 18–38 (IIGGLTTFLSMAYILFVNPIT), 57–77 (AVFTATALASAAGCILMGLIA), 81–101 (IAIAPGMGLNAFFAFSVVLGM), 107–127 (AALSGVFISGLIFVALSLTGF), 142–162 (AVGAGIGLFITFVGLQGSGII), 175–195 (IHSGPVLLTIFGVIVTVILMV), 201–221 (GVFIGMLLTAVAGMIFGLVPV), 251–271 (MLIVILTFLFVGFFDTAGTLV), 291–311 (ALLADSSSIVIGAVLGTSTTT), 327–347 (GFAAIVTGILFLLATFFSPLL), 354–374 (VTAPALIIVGALMVAPLGKIA), 388–408 (MIMMPLTYSIATGIAIGFIFY), and 419–439 (KEVHPIMYGLFVVFILYFIFL).

Belongs to the nucleobase:cation symporter-2 (NCS2) (TC 2.A.40) family. Azg-like subfamily.

It is found in the cell membrane. Its function is as follows. Involved in the uptake of the purine bases hypoxanthine and guanine. The chain is Guanine/hypoxanthine permease PbuG (pbuG) from Bacillus subtilis (strain 168).